A 146-amino-acid chain; its full sequence is Cytochrome c' (146 aa).

An N-terminal signal peptide occupies residues 1-21; that stretch reads MKLRIATIAGLVVLGSGFAVA. Residues arginine 29, threonine 86, alanine 87, cysteine 134, cysteine 137, and histidine 138 each coordinate heme c.

Monomer. Binds 1 heme c group covalently per subunit.

Its function is as follows. Cytochrome c' is the most widely occurring bacterial c-type cytochrome. Cytochromes c' are high-spin proteins and the heme has no sixth ligand. Their exact function is not known. The sequence is that of Cytochrome c' (cycA) from Rhodopseudomonas palustris (strain ATCC BAA-98 / CGA009).